We begin with the raw amino-acid sequence, 214 residues long: A-type ATP synthase subunit D (214 aa).

It belongs to the V-ATPase D subunit family. Has multiple subunits with at least A(3), B(3), C, D, E, F, H, I and proteolipid K(x).

The protein localises to the cell membrane. Functionally, component of the A-type ATP synthase that produces ATP from ADP in the presence of a proton gradient across the membrane. This Pyrococcus abyssi (strain GE5 / Orsay) protein is A-type ATP synthase subunit D.